Reading from the N-terminus, the 190-residue chain is dCTP deaminase, dUMP-forming (190 aa).

Residues 101–106 (KSSLGR), Asp-119, 127–129 (TLE), Gln-148, Tyr-162, and Gln-174 each bind dCTP. Glu-129 (proton donor/acceptor) is an active-site residue. The tract at residues 163–190 (GSTRVGSKYQGQRGPTPSRSYQNFITST) is disordered. The span at 171 to 190 (YQGQRGPTPSRSYQNFITST) shows a compositional bias: polar residues.

Belongs to the dCTP deaminase family. Homotrimer.

The enzyme catalyses dCTP + 2 H2O = dUMP + NH4(+) + diphosphate. It functions in the pathway pyrimidine metabolism; dUMP biosynthesis; dUMP from dCTP: step 1/1. Bifunctional enzyme that catalyzes both the deamination of dCTP to dUTP and the hydrolysis of dUTP to dUMP without releasing the toxic dUTP intermediate. The polypeptide is dCTP deaminase, dUMP-forming (Mycobacterium avium (strain 104)).